The sequence spans 335 residues: uncharacterized protein (335 aa).

A disordered region spans residues 201–236 (GPMAKNKARRKEDNYDTHNCDDANQDKKEEAEGKNT). The span at 210 to 235 (RKEDNYDTHNCDDANQDKKEEAEGKN) shows a compositional bias: basic and acidic residues.

In terms of biological role, dispensable for normal development and fertility. This is an uncharacterized protein from Homo sapiens (Human).